The chain runs to 423 residues: G2/mitotic-specific cyclin-B1 (423 aa).

Position 116 is a phosphoserine; by CDK1 (Ser-116). Ser-118 is subject to Phosphoserine. Position 123 is a phosphoserine; by PLK1 (Ser-123). The residue at position 137 (Ser-137) is a Phosphoserine. Interaction with CDK2 stretches follow at residues 159–167 (EYVKDIYAY) and 248–251 (YEEM). Thr-311 carries the post-translational modification Phosphothreonine.

Belongs to the cyclin family. Cyclin AB subfamily. Interacts with the CDC2 protein kinase to form a serine/threonine kinase holoenzyme complex also known as maturation promoting factor (MPF). The cyclin subunit imparts substrate specificity to the complex. Binds HEI10. Interacts with catalytically active RALBP1 and CDC2 during mitosis to form an endocytotic complex during interphase. Interacts with CCNF; interaction is required for nuclear localization. Interacts with CDK5RAP3. Interacts with RFPL4A and UBE2A. Interacts with INCA1. In terms of processing, ubiquitinated by the SCF(NIPA) complex during interphase, leading to its destruction. Deubiquitinated by USP22 during G2/M phase. Post-translationally, phosphorylated by PLK1 at Ser-123 on centrosomes during prophase: phosphorylation by PLK1 does not cause nuclear import. Phosphorylation at Ser-137 was also reported to be mediated by PLK1 but Ser-123 seems to be the primary phosphorylation site.

It localises to the cytoplasm. The protein resides in the nucleus. The protein localises to the cytoskeleton. Its subcellular location is the microtubule organizing center. It is found in the centrosome. Essential for the control of the cell cycle at the G2/M (mitosis) transition. The polypeptide is G2/mitotic-specific cyclin-B1 (Ccnb1) (Rattus norvegicus (Rat)).